Here is a 316-residue protein sequence, read N- to C-terminus: MFNRMTSLWMGDLDPYMDENFIKQAFSTMGETAFGVKIITHRVTGGSAGYCFVEMADEASVDRCVQRLNGKLVPGSNPPRKFKLNYATYGKRPEPGPEFSVFVGDLTSEVDDYQLHQFFLKKFPSCKGAKVVTDPYGNSRGYGFVKFSDENEQKKALEEFQNASGLGGKPIRISIAVNKGNKASTYHNQNNTYNTNYQQQYYRQPYNSYYPQWGYDQYSGYNYGYNPYAAPPPMMGPPPPMGMPPMPPDMQGSTEAHDGTEEVEEDPSEDPNPQVDVEELNRQYMERSEELYDSLMECHWLPMDTITSDISMMNGS.

RRM domains are found at residues 6–89 and 99–178; these read TSLW…YATY and FSVF…IAVN. A compositionally biased stretch (pro residues) spans 239 to 248; the sequence is PPMGMPPMPP. The interval 239 to 285 is disordered; the sequence is PPMGMPPMPPDMQGSTEAHDGTEEVEEDPSEDPNPQVDVEELNRQYM.

The protein belongs to the RRM TRSPAP family.

It localises to the nucleus. The protein resides in the cytoplasm. Involved in the early steps of selenocysteine biosynthesis and tRNA(Sec) charging to the later steps resulting in the cotranslational incorporation of selenocysteine into selenoproteins. The sequence is that of tRNA selenocysteine 1-associated protein 1-like (trnau1apl) from Danio rerio (Zebrafish).